Reading from the N-terminus, the 470-residue chain is Neuraminidase (470 aa).

The Intravirion portion of the chain corresponds to 1–6 (MNPNQK). A helical membrane pass occupies residues 7–27 (IITIGSICMAIGIISLILQIG). The segment at 11–33 (GSICMAIGIISLILQIGNIISIW) is involved in apical transport and lipid raft association. At 28 to 470 (NIISIWVSHS…GAELPFTIDK (443 aa)) the chain is on the virion surface side. The tract at residues 36 to 90 (HSIQTGSQNHTGICNQRIITYENSTWVNQTYVNISNTNVVAGKDTTSMTLAGNSS) is hypervariable stalk region. N44, N58, N63, N68, and N88 each carry an N-linked (GlcNAc...) asparagine; by host glycan. The tract at residues 91–470 (LCPIRGWAIY…GAELPFTIDK (380 aa)) is head of neuraminidase. 8 disulfides stabilise this stretch: C92–C417, C124–C129, C184–C231, C233–C238, C279–C292, C281–C290, C318–C335, and C421–C447. R118 contacts substrate. The N-linked (GlcNAc...) asparagine; by host glycan is linked to N146. D151 acts as the Proton donor/acceptor in catalysis. R152 contributes to the substrate binding site. N235 carries N-linked (GlcNAc...) asparagine; by host glycosylation. 277–278 (EE) serves as a coordination point for substrate. N-linked (GlcNAc...) asparagine; by host glycosylation occurs at N285. Residue R293 participates in substrate binding. The Ca(2+) site is built by D294, G298, and D324. An N-linked (GlcNAc...) asparagine; by host glycan is attached at N365. R368 contributes to the substrate binding site. Y402 acts as the Nucleophile in catalysis. N455 carries N-linked (GlcNAc...) asparagine; by host glycosylation.

Belongs to the glycosyl hydrolase 34 family. Homotetramer. Ca(2+) is required as a cofactor. Post-translationally, N-glycosylated.

The protein resides in the virion membrane. It localises to the host apical cell membrane. It catalyses the reaction Hydrolysis of alpha-(2-&gt;3)-, alpha-(2-&gt;6)-, alpha-(2-&gt;8)- glycosidic linkages of terminal sialic acid residues in oligosaccharides, glycoproteins, glycolipids, colominic acid and synthetic substrates.. With respect to regulation, inhibited by the neuraminidase inhibitors zanamivir (Relenza) and oseltamivir (Tamiflu). These drugs interfere with the release of progeny virus from infected cells and are effective against all influenza strains. Resistance to neuraminidase inhibitors is quite rare. Catalyzes the removal of terminal sialic acid residues from viral and cellular glycoconjugates. Cleaves off the terminal sialic acids on the glycosylated HA during virus budding to facilitate virus release. Additionally helps virus spread through the circulation by further removing sialic acids from the cell surface. These cleavages prevent self-aggregation and ensure the efficient spread of the progeny virus from cell to cell. Otherwise, infection would be limited to one round of replication. Described as a receptor-destroying enzyme because it cleaves a terminal sialic acid from the cellular receptors. May facilitate viral invasion of the upper airways by cleaving the sialic acid moieties on the mucin of the airway epithelial cells. Likely to plays a role in the budding process through its association with lipid rafts during intracellular transport. May additionally display a raft-association independent effect on budding. Plays a role in the determination of host range restriction on replication and virulence. Sialidase activity in late endosome/lysosome traffic seems to enhance virus replication. In Influenza A virus (strain A/Kiev/59/1979 H1N1), this protein is Neuraminidase.